The following is a 366-amino-acid chain: Ferrochelatase (366 aa).

2 residues coordinate Fe cation: His210 and Glu293.

This sequence belongs to the ferrochelatase family.

The protein resides in the cytoplasm. The enzyme catalyses heme b + 2 H(+) = protoporphyrin IX + Fe(2+). Its pathway is porphyrin-containing compound metabolism; protoheme biosynthesis; protoheme from protoporphyrin-IX: step 1/1. Catalyzes the ferrous insertion into protoporphyrin IX. This chain is Ferrochelatase, found in Leptospira borgpetersenii serovar Hardjo-bovis (strain JB197).